Here is a 148-residue protein sequence, read N- to C-terminus: ATP synthase epsilon chain (148 aa).

This sequence belongs to the ATPase epsilon chain family. As to quaternary structure, F-type ATPases have 2 components, CF(1) - the catalytic core - and CF(0) - the membrane proton channel. CF(1) has five subunits: alpha(3), beta(3), gamma(1), delta(1), epsilon(1). CF(0) has three main subunits: a, b and c.

The protein resides in the cell membrane. Its function is as follows. Produces ATP from ADP in the presence of a proton gradient across the membrane. The polypeptide is ATP synthase epsilon chain (Streptococcus thermophilus (strain ATCC BAA-250 / LMG 18311)).